The sequence spans 161 residues: Monooxygenase AgnL5 (161 aa).

The protein belongs to the avfA family.

It functions in the pathway secondary metabolite biosynthesis. Functionally, monooxygenase; part of the gene cluster that mediates the biosynthesis of agnestins, dihydroxy-xanthone metabolites. The pathway begins with the assembly and cyclization of atrochrysone thioester by the non-reducing polyketide synthase Agnpks1. The atrochrysone carboxyl ACP thioesterase AgnL7 then breaks the thioester bond and releases the atrochrysone carboxylic acid as the first enzyme-free intermediate. The decarboxylase AgnL1 then catalyzes the concerted decarboxylation-elimination required to convert atochrysone carboxylic acid into emodin anthrone, which is further oxidized to emodin by the anthrone oxygenase AgnL2. Emodin then undergoes reduction catalyzed by the oxidoreductase AgnL4 to yield the dihydroquinone tautomer which is the substrate for reduction by the short chain dehydrogenase AgnL6 reduction to produce hydroxyketone, followed by AgnL8 dehydration and likely spontaneous autoxidation to chrysophanol. Baeyer-Villiger oxidation by the oxidase AgnL3 leads to monodictyphenone via cleavage of the C-10/C-10a bond of chrysophanol. Alternative cleavage at the C-4a/C-10 bond of chrysophanol also leads to the formation some cephalone F. Further conversion to agnestins A and B, requires reduction to dihydro-monodictyphenone, oxidation to agnestin C probably via an epoxide, and rearrangement to either agnestin A or agnestin B directly, although agnestin A or agnestin B can also interconvert. Within the cluster, AgnR1 is the only unassigned oxidoreductase present which could be involved in this conversion. However, AgnR1 seems not to be involved in this step, and thus genes involved in the proposed oxidation/reduction may be located elsewhere on the genome. Further agnestin A derivatives are probably formed by spontaneous decarboxylations, dehydrations and methanolysis reactions. The chain is Monooxygenase AgnL5 from Paecilomyces divaricatus (Penicillium divaricatum).